The chain runs to 237 residues: Ribose-5-phosphate isomerase A (237 aa).

Substrate-binding positions include 30–33, 87–90, and 100–103; these read SGST, DGAD, and KGGG. The Proton acceptor role is filled by E109. K127 provides a ligand contact to substrate.

This sequence belongs to the ribose 5-phosphate isomerase family. In terms of assembly, homodimer.

The catalysed reaction is aldehydo-D-ribose 5-phosphate = D-ribulose 5-phosphate. Its pathway is carbohydrate degradation; pentose phosphate pathway; D-ribose 5-phosphate from D-ribulose 5-phosphate (non-oxidative stage): step 1/1. Its function is as follows. Catalyzes the reversible conversion of ribose-5-phosphate to ribulose 5-phosphate. In Prochlorococcus marinus (strain SARG / CCMP1375 / SS120), this protein is Ribose-5-phosphate isomerase A.